Reading from the N-terminus, the 508-residue chain is Serine/threonine-protein kinase VRK2 (508 aa).

A Protein kinase domain is found at 29–319; the sequence is WVLGKKIGSG…KKILNPHGIP (291 aa). ATP is bound by residues 35–43 and Lys61; that span reads IGSGGFGLI. Asp166 serves as the catalytic Proton acceptor. Position 336 is a phosphothreonine (Thr336). Residues 397 to 508 form an interaction with MAP3K7 region; that stretch reads TRRRQKYQES…MLVFLALFFL (112 aa). Ser406 bears the Phosphoserine mark. The chain crosses the membrane as a helical; Anchor for type IV membrane protein span at residues 487–507; it reads VYYYRIIIPVLLMLVFLALFF.

It belongs to the protein kinase superfamily. CK1 Ser/Thr protein kinase family. VRK subfamily. Isoform 1 interacts with MAP3K7, MAP2K7, MAP2K1 and KSR1. Isoform 1 and isoform 2 interact with RAN and MAPK8IP1. As to quaternary structure, (Microbial infection) Isoform 1 interacts with Epstein-Barr virus BHRF1; this interaction is involved in protecting cells from apoptosis. In terms of assembly, (Microbial infection) Isoform 1 interacts with vaccinia protein B12. Post-translationally, autophosphorylated. Isoform 1 and isoform 2 are expressed in various tumor cell lines. Expression of isoform 1 inversely correlates with ERBB2 in breast carcinomas (at protein level). Widely expressed. Highly expressed in fetal liver, skeletal muscle, pancreas, heart, peripheral blood leukocytes and testis.

The protein resides in the cytoplasm. Its subcellular location is the endoplasmic reticulum membrane. It localises to the mitochondrion membrane. It is found in the nucleus envelope. The protein localises to the nucleus. The catalysed reaction is L-seryl-[protein] + ATP = O-phospho-L-seryl-[protein] + ADP + H(+). It catalyses the reaction L-threonyl-[protein] + ATP = O-phospho-L-threonyl-[protein] + ADP + H(+). With respect to regulation, RAN inhibits its autophosphorylation and its ability to phosphorylate histone H3. Functionally, serine/threonine kinase that regulates several signal transduction pathways. Isoform 1 modulates the stress response to hypoxia and cytokines, such as interleukin-1 beta (IL1B) and this is dependent on its interaction with MAPK8IP1, which assembles mitogen-activated protein kinase (MAPK) complexes. Inhibition of signal transmission mediated by the assembly of MAPK8IP1-MAPK complexes reduces JNK phosphorylation and JUN-dependent transcription. Phosphorylates 'Thr-18' of p53/TP53, histone H3, and may also phosphorylate MAPK8IP1. Phosphorylates BANF1 and disrupts its ability to bind DNA and reduces its binding to LEM domain-containing proteins. Down-regulates the transactivation of transcription induced by ERBB2, HRAS, BRAF, and MEK1. Blocks the phosphorylation of ERK in response to ERBB2 and HRAS. Can also phosphorylate the following substrates that are commonly used to establish in vitro kinase activity: casein, MBP and histone H2B, but it is not sure that this is physiologically relevant. In terms of biological role, phosphorylates 'Thr-18' of p53/TP53, as well as histone H3. Reduces p53/TP53 ubiquitination by MDM2, promotes p53/TP53 acetylation by EP300 and thereby increases p53/TP53 stability and activity. The sequence is that of Serine/threonine-protein kinase VRK2 (VRK2) from Homo sapiens (Human).